The primary structure comprises 426 residues: Monocarboxylate transporter 13 (426 aa).

Residues 1–10 are Cytoplasmic-facing; that stretch reads MAYRAEPPDG. 12 helical membrane-spanning segments follow: residues 11 to 31, 52 to 72, 83 to 103, 106 to 126, 139 to 159, 172 to 192, 221 to 241, 244 to 264, 283 to 303, 306 to 326, 338 to 358, and 374 to 394; these read GWGW…FGVL, VSWI…VGSA, VMTG…ATSL, LYLS…TPTL, LAMG…APLF, LLLV…LRPL, VALT…VAHL, LGWD…SDLV, LLML…VAEA, GLVA…PVAF, IYCG…LGAP, and FVVA…LPHF. The Cytoplasmic portion of the chain corresponds to 395–426; it reads FCFSAPTSKPQDLVTEALDTKVPLPEEGLGED.

Belongs to the major facilitator superfamily. Monocarboxylate porter (TC 2.A.1.13) family.

It localises to the golgi apparatus membrane. The protein resides in the cell membrane. Functionally, proton-linked monocarboxylate transporter. May catalyze the transport of monocarboxylates across the plasma membrane. This Bos taurus (Bovine) protein is Monocarboxylate transporter 13 (SLC16A13).